We begin with the raw amino-acid sequence, 560 residues long: Membrane protein insertase YidC (560 aa).

6 helical membrane-spanning segments follow: residues 5-25, 334-354, 357-377, 431-451, 476-496, and 522-542; these read IINLIAAIVLSLSIIFGWQYF, AIDFGWFYIITKPVFYAMNFF, YVGNFGVSILIVTVIIKLLMF, LPILVQIPVFFSIYKVLYVTI, LFGLLPFSPPSFLMIGAWPIL, and FMPLIFLFMFSSFPVGLLIYW.

Belongs to the OXA1/ALB3/YidC family. Type 1 subfamily. Interacts with the Sec translocase complex via SecD. Specifically interacts with transmembrane segments of nascent integral membrane proteins during membrane integration.

It is found in the cell inner membrane. Required for the insertion and/or proper folding and/or complex formation of integral membrane proteins into the membrane. Involved in integration of membrane proteins that insert both dependently and independently of the Sec translocase complex, as well as at least some lipoproteins. Aids folding of multispanning membrane proteins. The sequence is that of Membrane protein insertase YidC from Rickettsia akari (strain Hartford).